A 274-amino-acid polypeptide reads, in one-letter code: Nitrogenase iron protein (274 aa).

8–15 (GKGGIGKS) is an ATP binding site. Cys-94 is a binding site for [4Fe-4S] cluster. ADP-ribosylarginine; by dinitrogenase reductase ADP-ribosyltransferase is present on Arg-97. Residue Cys-131 participates in [4Fe-4S] cluster binding.

The protein belongs to the NifH/BchL/ChlL family. Homodimer. [4Fe-4S] cluster serves as cofactor. The reversible ADP-ribosylation of Arg-97 inactivates the nitrogenase reductase and regulates nitrogenase activity.

The catalysed reaction is N2 + 8 reduced [2Fe-2S]-[ferredoxin] + 16 ATP + 16 H2O = H2 + 8 oxidized [2Fe-2S]-[ferredoxin] + 2 NH4(+) + 16 ADP + 16 phosphate + 6 H(+). In terms of biological role, the key enzymatic reactions in nitrogen fixation are catalyzed by the nitrogenase complex, which has 2 components: the iron protein and the molybdenum-iron protein. The polypeptide is Nitrogenase iron protein (Desulfatibacillum aliphaticivorans).